Reading from the N-terminus, the 384-residue chain is Chaperone protein DnaJ 1 (384 aa).

Residues 4–68 (DYYGLLGVAR…EKRRIVDMGG (65 aa)) enclose the J domain. Residues 133 to 215 (GVTKHLTVDT…CGGDGRVRAR (83 aa)) form a CR-type zinc finger. Cysteine 146, cysteine 149, cysteine 163, cysteine 166, cysteine 189, cysteine 192, cysteine 203, and cysteine 206 together coordinate Zn(2+). 4 CXXCXGXG motif repeats span residues 146–153 (CDACHGSG), 163–170 (CETCGGAG), 189–196 (CPTCRGAG), and 203–210 (CHKCGGDG).

It belongs to the DnaJ family. As to quaternary structure, homodimer. Requires Zn(2+) as cofactor.

The protein resides in the cytoplasm. Functionally, participates actively in the response to hyperosmotic and heat shock by preventing the aggregation of stress-denatured proteins and by disaggregating proteins, also in an autonomous, DnaK-independent fashion. Unfolded proteins bind initially to DnaJ; upon interaction with the DnaJ-bound protein, DnaK hydrolyzes its bound ATP, resulting in the formation of a stable complex. GrpE releases ADP from DnaK; ATP binding to DnaK triggers the release of the substrate protein, thus completing the reaction cycle. Several rounds of ATP-dependent interactions between DnaJ, DnaK and GrpE are required for fully efficient folding. Also involved, together with DnaK and GrpE, in the DNA replication of plasmids through activation of initiation proteins. This is Chaperone protein DnaJ 1 from Nocardia farcinica (strain IFM 10152).